The primary structure comprises 242 residues: Putative prolyl 4-hydroxylase (242 aa).

Positions 128–238 (NAEDLQVVRY…KWIANLWFRE (111 aa)) constitute a Fe2OG dioxygenase domain.

This sequence belongs to the P4HA family. Fe cation serves as cofactor. Requires L-ascorbate as cofactor.

Its subcellular location is the virion. The enzyme catalyses L-prolyl-[collagen] + 2-oxoglutarate + O2 = trans-4-hydroxy-L-prolyl-[collagen] + succinate + CO2. Functionally, may catalyze the post-translational formation of 4-hydroxyproline in -Xaa-Pro-Gly- sequences in the 6 collagen-like proteins of Mimivirus. This Acanthamoeba polyphaga mimivirus (APMV) protein is Putative prolyl 4-hydroxylase.